Reading from the N-terminus, the 212-residue chain is Thymidylate kinase (212 aa).

10-17 (GPDGSGKS) contributes to the ATP binding site.

The protein belongs to the thymidylate kinase family.

The enzyme catalyses dTMP + ATP = dTDP + ADP. Its function is as follows. Phosphorylation of dTMP to form dTDP in both de novo and salvage pathways of dTTP synthesis. The chain is Thymidylate kinase from Exiguobacterium sp. (strain ATCC BAA-1283 / AT1b).